Reading from the N-terminus, the 369-residue chain is MHGESPIKRRESRKIWVGSVPVGGDAPIAVQSMTNSDTNDVAATVAQINRLEAAGVDIVRVSVPDMDAAEAFGRIKQLVKVPLVADIHFDYRIALRVAELGVDCLRINPGNIGREDRVRAVVDAARDRGIPIRIGVNAGSLEKDLQKKYGEPTPEALVESALRHVEHLERLNFQDFKVSVKASDVFMAVAAYRLLAKQIVQPLHLGITEAGGLRSGTVKSAVGLGMLLAEGIGDTIRISLAADPVEEVKVGYDILKSLRLRSRGINFIACPSCSRQNFDVVKTMNELEGRLEDLLVPLDVAVIGCVVNGPGEAKEAHIGLTGGTPNLIYIDGKPAQKLTNDNLVDELERLIREKAAEKAEADASVIVRG.

Positions 270, 273, 305, and 312 each coordinate [4Fe-4S] cluster.

It belongs to the IspG family. It depends on [4Fe-4S] cluster as a cofactor.

It carries out the reaction (2E)-4-hydroxy-3-methylbut-2-enyl diphosphate + oxidized [flavodoxin] + H2O + 2 H(+) = 2-C-methyl-D-erythritol 2,4-cyclic diphosphate + reduced [flavodoxin]. It participates in isoprenoid biosynthesis; isopentenyl diphosphate biosynthesis via DXP pathway; isopentenyl diphosphate from 1-deoxy-D-xylulose 5-phosphate: step 5/6. Functionally, converts 2C-methyl-D-erythritol 2,4-cyclodiphosphate (ME-2,4cPP) into 1-hydroxy-2-methyl-2-(E)-butenyl 4-diphosphate. This Pseudomonas savastanoi pv. phaseolicola (strain 1448A / Race 6) (Pseudomonas syringae pv. phaseolicola (strain 1448A / Race 6)) protein is 4-hydroxy-3-methylbut-2-en-1-yl diphosphate synthase (flavodoxin).